Consider the following 379-residue polypeptide: Putative zinc metalloprotease BR1156/BS1330_I1152 (379 aa).

Residue histidine 33 participates in Zn(2+) binding. Glutamate 34 is a catalytic residue. Histidine 37 lines the Zn(2+) pocket. The next 4 helical transmembrane spans lie at 39 to 61 (LVAR…ELLG), 122 to 144 (VFAG…FALY), 305 to 327 (FDWL…LFPL), and 355 to 377 (IFYR…NDLF). A PDZ domain is found at 133 to 208 (TIAIFSVFFA…LNFTVERDGK (76 aa)).

Belongs to the peptidase M50B family. It depends on Zn(2+) as a cofactor.

The protein resides in the cell inner membrane. This Brucella suis biovar 1 (strain 1330) protein is Putative zinc metalloprotease BR1156/BS1330_I1152.